Reading from the N-terminus, the 797-residue chain is Methionine--tRNA ligase, cytoplasmic (797 aa).

Residues 26 to 36 (PYVNNVPHLGN) carry the 'HIGH' region motif. The 'KMSKS' region signature appears at 348–352 (KFSKS). K351 serves as a coordination point for ATP. The interval 601-634 (DQLNKTKLSDAKKQKASSKGGGKPKPQPAADREI) is disordered. Residues 635 to 738 (TMARLDIRVG…KTANIGERVT (104 aa)) form the tRNA-binding domain.

The protein belongs to the class-I aminoacyl-tRNA synthetase family.

The protein resides in the cytoplasm. The protein localises to the cytosol. The catalysed reaction is tRNA(Met) + L-methionine + ATP = L-methionyl-tRNA(Met) + AMP + diphosphate. The chain is Methionine--tRNA ligase, cytoplasmic from Arabidopsis thaliana (Mouse-ear cress).